A 465-amino-acid polypeptide reads, in one-letter code: Cysteine--tRNA ligase (465 aa).

Cys-27 provides a ligand contact to Zn(2+). Positions Pro-29–His-39 match the 'HIGH' region motif. Zn(2+) is bound by residues Cys-207, His-237, and Glu-241. Positions Lys-269 to Ser-273 match the 'KMSKS' region motif. ATP is bound at residue Lys-272.

It belongs to the class-I aminoacyl-tRNA synthetase family. As to quaternary structure, monomer. Zn(2+) is required as a cofactor.

Its subcellular location is the cytoplasm. The enzyme catalyses tRNA(Cys) + L-cysteine + ATP = L-cysteinyl-tRNA(Cys) + AMP + diphosphate. This Helicobacter pylori (strain ATCC 700392 / 26695) (Campylobacter pylori) protein is Cysteine--tRNA ligase (cysS).